The following is a 1241-amino-acid chain: DNA-directed RNA polymerase subunit beta (1241 aa).

The interval 1201-1224 (AEEEQDTDVDYITEDDFESPDPEI) is disordered.

Belongs to the RNA polymerase beta chain family. In terms of assembly, the RNAP catalytic core consists of 2 alpha, 1 beta, 1 beta' and 1 omega subunit. When a sigma factor is associated with the core the holoenzyme is formed, which can initiate transcription.

It catalyses the reaction RNA(n) + a ribonucleoside 5'-triphosphate = RNA(n+1) + diphosphate. Its function is as follows. DNA-dependent RNA polymerase catalyzes the transcription of DNA into RNA using the four ribonucleoside triphosphates as substrates. The sequence is that of DNA-directed RNA polymerase subunit beta from Alkaliphilus oremlandii (strain OhILAs) (Clostridium oremlandii (strain OhILAs)).